The chain runs to 364 residues: MQGFRNHTVLQLELTQPRLLVIGPNGIGKSNLLEAVELLGSLRSHRCSNDRDLIQWDTPQALIRADVGDGDRLELELRRQGGRQARRNGKLLDRQLDLIGPLRCIGFSALDLDLVRGEPALRRQWLDRVVLQLEPVYADLMARLNRLLRQRSQLWRQRQISSGERHALLEAFDVQMALVSTRIHRRRQRALHRLEPIAQRWQTHLSGGTETLELHYKPGSRLDGEDAEEPWRLAIEEQLRQQREEEERLGSCRVGPHRDEIALLLGGSPARRFGSAGQQRSLVLGLKLAELELVTQLCGEPPLLLLDDVLAELDPTRQQLLLEAVGESHQCLVSATHLEGFGGGWQQQAQILGARELRPDLKIG.

Position 23–30 (23–30 (GPNGIGKS)) interacts with ATP.

Belongs to the RecF family.

The protein localises to the cytoplasm. The RecF protein is involved in DNA metabolism; it is required for DNA replication and normal SOS inducibility. RecF binds preferentially to single-stranded, linear DNA. It also seems to bind ATP. The protein is DNA replication and repair protein RecF of Synechococcus sp. (strain CC9605).